The sequence spans 494 residues: Tripartite motif-containing protein 5 (494 aa).

N-acetylalanine is present on Ala-2. Residues 15 to 59 form an RING-type zinc finger; the sequence is CPICLELLTEPLSLDCGHSFCQACITANHKESMLHQGERSCPLCR. The segment at 91–132 adopts a B box-type zinc-finger fold; sequence QNVDHCARHGEKLLLFCEQDGNIICWLCERSQEHRGHNTFLV. Zn(2+)-binding residues include Cys-96, His-99, Cys-118, and His-124. Residues 132–223 adopt a coiled-coil conformation; the sequence is VEEVAQKYRE…RLVQSENDMV (92 aa). Residues 186 to 199 form a required for interaction with GABARAP and for autophagy region; it reads FKQLRDILDCEESN. In terms of domain architecture, B30.2/SPRY spans 280–494; it reads PDLKRMLQVL…LPMTLCSPSS (215 aa).

It belongs to the TRIM/RBCC family. Can form homodimers and homotrimers. In addition to lower-order dimerization, also exhibits a higher-order multimerization and both low- and high-order multimerizations are essential for its restriction activity. Interacts with BTBD1 and BTBD2. Interacts with PSMC4, PSMC5, PSMD7 and HSPA8/HSC70. Interacts (via B30.2/SPRY domain) with HSPA1A/B. Interacts with PSMC2, MAP3K7/TAK1, TAB2 and TAB3. Interacts with SQSTM1. Interacts with TRIM6 and TRIM34. Interacts with ULK1 (phosphorylated form), GABARAP, GABARAPL1, GABARAPL2, MAP1LC3A, MAP1LC3C and BECN1. Post-translationally, degraded in a proteasome-independent fashion in the absence of viral infection but in a proteasome-dependent fashion following exposure to restriction sensitive virus. Autoubiquitinated in a RING finger- and UBE2D2-dependent manner. Monoubiquitinated by TRIM21. Deubiquitinated by Yersinia YopJ. Ubiquitination may not lead to proteasomal degradation.

It localises to the cytoplasm. It is found in the nucleus. The catalysed reaction is S-ubiquitinyl-[E2 ubiquitin-conjugating enzyme]-L-cysteine + [acceptor protein]-L-lysine = [E2 ubiquitin-conjugating enzyme]-L-cysteine + N(6)-ubiquitinyl-[acceptor protein]-L-lysine.. It functions in the pathway protein modification; protein ubiquitination. In terms of biological role, capsid-specific restriction factor that prevents infection from non-host-adapted retroviruses. Blocks viral replication early in the life cycle, after viral entry but before reverse transcription. In addition to acting as a capsid-specific restriction factor, also acts as a pattern recognition receptor that activates innate immune signaling in response to the retroviral capsid lattice. Binding to the viral capsid triggers its E3 ubiquitin ligase activity, and in concert with the heterodimeric ubiquitin conjugating enzyme complex UBE2V1-UBE2N (also known as UBC13-UEV1A complex) generates 'Lys-63'-linked polyubiquitin chains, which in turn are catalysts in the autophosphorylation of the MAP3K7/TAK1 complex (includes TAK1, TAB2, and TAB3). Activation of the MAP3K7/TAK1 complex by autophosphorylation results in the induction and expression of NF-kappa-B and MAPK-responsive inflammatory genes, thereby leading to an innate immune response in the infected cell. Plays a role in regulating autophagy through activation of autophagy regulator BECN1 by causing its dissociation from its inhibitors BCL2 and TAB2. The polypeptide is Tripartite motif-containing protein 5 (TRIM5) (Saimiri boliviensis boliviensis (Bolivian squirrel monkey)).